The primary structure comprises 1730 residues: SH3 and multiple ankyrin repeat domains protein 3 (1730 aa).

The intramolecular interaction with the ANK repeats stretch occupies residues 1–75; the sequence is MDGPGASAVV…KFLDEERLLQ (75 aa). Position 122 is a phosphotyrosine (Y122). 6 ANK repeats span residues 148–178, 182–211, 215–245, 249–278, 282–311, and 315–345; these read SGEC…HLDF, DGLT…SPDY, RGLT…QLGT, NGWQ…NMGA, SGNT…NKDV, and NSQT…DVVP. Residues 354–466 form a disordered region; that stretch reads KRRRLAGPSG…PPPRGPKRKL (113 aa). Phosphoserine occurs at positions 373, 375, 387, and 394. The span at 404–415 shows a compositional bias: basic and acidic residues; sequence LQEEKDRDRDGE. Residues 444-460 show a composition bias toward pro residues; that stretch reads APGPGPASPAPPAPPPR. Positions 470–529 constitute an SH3 domain; that stretch reads VPGRKFIAVKAHSPQGEGEIPLHRGEAVKVLSIGEGGFWEGTVKGRTGWFPADCVEEVQM. A Phosphoserine modification is found at S482. Residue Y555 is modified to Phosphotyrosine. The PDZ domain maps to 570-664; that stretch reads VAILQKRDHE…RLVMKVVSVT (95 aa). Residues 664 to 688 form a disordered region; that stretch reads TRKPEEDGARRRAPPPPKRAPSTTL. The interval 677 to 684 is required for interaction with ABI1; it reads PPPPKRAP. 4 positions are modified to phosphoserine: S694, S781, S790, and S801. 2 disordered regions span residues 760–1460 and 1475–1524; these read QGLP…AAGP and GDPV…SLLD. Over residues 812–844 the composition is skewed to pro residues; that stretch reads IPPPPQTAPPPPPAPYYFDSGPPPTFSPPPPPG. Residues 857–869 are compositionally biased toward low complexity; that stretch reads GLEARLGAGAAGL. Residues S890 and S897 each carry the phosphoserine modification. The residue at position 912 (T912) is a Phosphothreonine. Position 930 is a phosphotyrosine (Y930). R965 carries the post-translational modification Asymmetric dimethylarginine. Position 995 is a phosphoserine (S995). Residues 1016–1026 are compositionally biased toward basic and acidic residues; the sequence is VKERRLEERRR. Over residues 1078 to 1092 the composition is skewed to low complexity; the sequence is LKPLVGGPSLGPSGS. Over residues 1122–1131 the composition is skewed to polar residues; sequence SQTPSRSPTP. Residue T1130 is modified to Phosphothreonine. A phosphoserine mark is found at S1134, S1159, S1163, and S1166. Over residues 1174–1194 the composition is skewed to basic and acidic residues; the sequence is ARREAEKPPREERKSPEDKKS. T1234 bears the Phosphothreonine mark. Positions 1235-1250 are enriched in low complexity; it reads PELAPAPMQAAAVAEP. 2 stretches are compositionally biased toward pro residues: residues 1251-1261 and 1321-1333; these read MPSPRAQPPGS and TPPP…PTTV. S1253 carries the phosphoserine modification. Residues 1360–1370 show a composition bias toward basic and acidic residues; that stretch reads ADTRSSSDPHL. Residues 1371 to 1392 are compositionally biased toward low complexity; sequence ETTSTISTVSSMSTLSSESGEL. Positions 1410-1416 match the SH3-binding motif; that stretch reads PPVPPKP. S1420 carries the phosphoserine modification. Residues 1494–1514 adopt a coiled-coil conformation; sequence ISELSSRLQQLNKDTRSLGEE. Polar residues predominate over residues 1495–1505; it reads SELSSRLQQLN. S1510, S1521, S1529, and S1539 each carry phosphoserine. Disordered stretches follow at residues 1546–1584 and 1627–1663; these read ISAQ…PASL and VRSV…QQKP. Residues 1627–1637 show a composition bias toward low complexity; sequence VRSVSARSRSP. Phosphoserine occurs at positions 1634, 1636, and 1638. The segment covering 1638–1648 has biased composition (pro residues); that stretch reads SPSPLPSPSPG. The span at 1649–1658 shows a compositional bias: low complexity; it reads SGPSAGPRRP. One can recognise an SAM domain in the interval 1667 to 1730; the sequence is WSKFDVGDWL…ERALRQLDGS (64 aa).

This sequence belongs to the SHANK family. May homomultimerize via its SAM domain. Interacts with BAIAP2, DBNL and SLC17A7/VGLUT1. Interacts with DLGAP1/GKAP, GRM1/MGLUR1, GRM5/MGLUR5 and LZTS3 C-termini via its PDZ domain. Interacts with ABI1, HOMER1, HOMER2, HOMER3 and CTTN/cortactin SH3 domain. Is part of a complex with DLG4/PSD-95 and DLGAP1/GKAP. Interacts (via PDZ domain) with the GRIA1 subunit of the AMPA receptor (via PDZ-binding motif). Interacts with WASF1 and CYFIP2; the interactions mediate the association of SHANK3 with the WAVE1 complex. Interacts with ARPC2; the interaction probably mediates the association of SHANK3 with the Arp2/3 complex. Interacts (via ANK repeats) with SHARPIN and SPTAN1. Interacts (via PDZ domain) with ARHGAP44 (probably via PDZ-binding motif); the interaction takes place in dendritic spines and promotes GRIA1 exocytosis. Interacts with CAMK2A. Interacts with DIP2A. Interacts with ADGRL3. In terms of tissue distribution, in brain, highly expressed in striatum, thalamus, hippocampus and granule cells of the cerebellum.

Its subcellular location is the cytoplasm. The protein resides in the synapse. The protein localises to the postsynaptic density. It is found in the cell projection. It localises to the dendritic spine. Functionally, major scaffold postsynaptic density protein which interacts with multiple proteins and complexes to orchestrate the dendritic spine and synapse formation, maturation and maintenance. Interconnects receptors of the postsynaptic membrane including NMDA-type and metabotropic glutamate receptors via complexes with GKAP/PSD-95 and HOMER, respectively, and the actin-based cytoskeleton. Plays a role in the structural and functional organization of the dendritic spine and synaptic junction through the interaction with Arp2/3 and WAVE1 complex as well as the promotion of the F-actin clusters. By way of this control of actin dynamics, participates in the regulation of developing neurons growth cone motility and the NMDA receptor-signaling. Also modulates GRIA1 exocytosis and GRM5/MGLUR5 expression and signaling to control the AMPA and metabotropic glutamate receptor-mediated synaptic transmission and plasticity. May be required at an early stage of synapse formation and be inhibited by IGF1 to promote synapse maturation. In Mus musculus (Mouse), this protein is SH3 and multiple ankyrin repeat domains protein 3 (Shank3).